The chain runs to 353 residues: Pleckstrin-2 (353 aa).

M1 carries the post-translational modification N-acetylmethionine. Residues 4–104 (GVLKEGFLVK…WAFEITGAIH (101 aa)) form the PH 1 domain. S120 bears the Phosphoserine mark. Residues 139 to 225 (TSTGIRPSPN…DSTALYTFAE (87 aa)) form the DEP domain. Residues 247–353 (TVVKQGYLSK…EWIEAIKKLT (107 aa)) form the PH 2 domain.

In terms of tissue distribution, ubiquitous. Most abundant in the thymus, large bowel, small bowel, stomach, and prostate.

The protein resides in the cell projection. Its subcellular location is the lamellipodium membrane. It is found in the cytoplasm. The protein localises to the cytoskeleton. May help orchestrate cytoskeletal arrangement. Contribute to lamellipodia formation. Overexpression of pleckstrin 2 causes large lamellipodia and peripheral ruffle formation. The chain is Pleckstrin-2 (Plek2) from Mus musculus (Mouse).